The chain runs to 150 residues: Large ribosomal subunit protein bL9 (150 aa).

It belongs to the bacterial ribosomal protein bL9 family.

Functionally, binds to the 23S rRNA. The protein is Large ribosomal subunit protein bL9 of Photobacterium profundum (strain SS9).